The following is a 458-amino-acid chain: Zinc finger protein 19 (458 aa).

Residues V14–R85 form the KRAB domain. 9 consecutive C2H2-type zinc fingers follow at residues F161 to H183, F189 to H211, Y217 to H239, Y245 to H267, Y273 to H295, Y301 to H323, Y329 to H351, F357 to H379, and Y385 to H407. Residues Y413–H433 form a C2H2-type 10; atypical zinc finger.

Belongs to the krueppel C2H2-type zinc-finger protein family.

It is found in the nucleus. Functionally, may be involved in transcriptional regulation. The chain is Zinc finger protein 19 (ZNF19) from Homo sapiens (Human).